We begin with the raw amino-acid sequence, 30 residues long: Cycloviolacin-O20 (30 aa).

The cyclopeptide (Gly-Asp) cross-link spans 1 to 30; the sequence is GIPCGESCVWIPCLTSAIGCSCKSKVCYRD. 3 disulfides stabilise this stretch: C4–C20, C8–C22, and C13–C27.

Post-translationally, this is a cyclic peptide.

Functionally, probably participates in a plant defense mechanism. The polypeptide is Cycloviolacin-O20 (Viola odorata (Sweet violet)).